The chain runs to 37 residues: Photosystem II reaction center protein Y (37 aa).

Residues 4–22 (AIVVFAPIIAAVAWVVFNI) form a helical membrane-spanning segment.

Belongs to the PsbY family. In terms of assembly, PSII is composed of 1 copy each of membrane proteins PsbA, PsbB, PsbC, PsbD, PsbE, PsbF, PsbH, PsbI, PsbJ, PsbK, PsbL, PsbM, PsbT, PsbX, PsbY, Psb30/Ycf12, peripheral proteins PsbO, CyanoQ (PsbQ), PsbU, PsbV and a large number of cofactors. It forms dimeric complexes.

Its subcellular location is the cellular thylakoid membrane. Its function is as follows. Loosely associated component of the core of photosystem II (PSII), it is not always seen in crystals. PSII is a light-driven water plastoquinone oxidoreductase, using light energy to abstract electrons from H(2)O, generating a proton gradient subsequently used for ATP formation. In Prochlorococcus marinus (strain MIT 9312), this protein is Photosystem II reaction center protein Y.